The following is a 467-amino-acid chain: Asparagine--tRNA ligase (467 aa).

It belongs to the class-II aminoacyl-tRNA synthetase family. In terms of assembly, homodimer.

The protein localises to the cytoplasm. The enzyme catalyses tRNA(Asn) + L-asparagine + ATP = L-asparaginyl-tRNA(Asn) + AMP + diphosphate + H(+). The polypeptide is Asparagine--tRNA ligase (Phocaeicola vulgatus (strain ATCC 8482 / DSM 1447 / JCM 5826 / CCUG 4940 / NBRC 14291 / NCTC 11154) (Bacteroides vulgatus)).